The following is a 317-amino-acid chain: tRNA dimethylallyltransferase (317 aa).

19–26 (GPTASGKS) contributes to the ATP binding site. A substrate-binding site is contributed by 21-26 (TASGKS). Residues 44–47 (DSMQ) form an interaction with substrate tRNA region.

Belongs to the IPP transferase family. Monomer. Mg(2+) serves as cofactor.

It catalyses the reaction adenosine(37) in tRNA + dimethylallyl diphosphate = N(6)-dimethylallyladenosine(37) in tRNA + diphosphate. Catalyzes the transfer of a dimethylallyl group onto the adenine at position 37 in tRNAs that read codons beginning with uridine, leading to the formation of N6-(dimethylallyl)adenosine (i(6)A). The sequence is that of tRNA dimethylallyltransferase from Methylorubrum extorquens (strain PA1) (Methylobacterium extorquens).